Here is a 120-residue protein sequence, read N- to C-terminus: Crustacean hyperglycemic hormones 1 (120 aa).

A signal peptide spans 1 to 27 (MTAFRMVWSMLLASLLMLLVASSTAPA). Intrachain disulfides connect Cys53/Cys89, Cys69/Cys85, and Cys72/Cys98. A Valine amide modification is found at Val118.

It belongs to the arthropod CHH/MIH/GIH/VIH hormone family.

The protein resides in the secreted. Hormone found in the sinus gland of isopods and decapods which controls the blood sugar level. Has a secretagogue action over the amylase released from the midgut gland. May act as a stress hormone and may be involved in the control of molting and reproduction. This chain is Crustacean hyperglycemic hormones 1 (CHH1), found in Penaeus monodon (Giant tiger prawn).